Consider the following 330-residue polypeptide: tRNA N6-adenosine threonylcarbamoyltransferase (330 aa).

2 residues coordinate Fe cation: histidine 110 and histidine 114. Substrate-binding positions include 133 to 137, aspartate 166, glycine 179, and asparagine 268; that span reads LVSGG. Aspartate 296 lines the Fe cation pocket.

It belongs to the KAE1 / TsaD family. It depends on Fe(2+) as a cofactor.

The protein resides in the cytoplasm. It carries out the reaction L-threonylcarbamoyladenylate + adenosine(37) in tRNA = N(6)-L-threonylcarbamoyladenosine(37) in tRNA + AMP + H(+). Functionally, required for the formation of a threonylcarbamoyl group on adenosine at position 37 (t(6)A37) in tRNAs that read codons beginning with adenine. Is involved in the transfer of the threonylcarbamoyl moiety of threonylcarbamoyl-AMP (TC-AMP) to the N6 group of A37, together with TsaE and TsaB. TsaD likely plays a direct catalytic role in this reaction. The sequence is that of tRNA N6-adenosine threonylcarbamoyltransferase from Kosmotoga olearia (strain ATCC BAA-1733 / DSM 21960 / TBF 19.5.1).